A 545-amino-acid chain; its full sequence is MIFGELRRLYLIIRVFLSYGLDELIPKTRLALPLRLWRKCLFWMPNCHKDEPLGARLRLALEQLGPVWIKFGQMMSTRRDLFPPHIADQLAMLQDKVAPFDGAQAKKLIEHSLGAPVESQFDDFDIVPLASASIAQVHTATLKENGREVVIKVIRPDILPVIKADMKLIYRLARWVPRLLPDGRRLRPQEVVADYEKTLLDELNLLREAANAIQLRRNFADGQMLYVPEIYSDYCSENMLVMERIYGIPISDVATLEQHGVNMKLLAERGVQVFFTQVFRDSFFHADMHPGNIFVSYEHPEDPQYIGIDCGIVGSLNKEDKRYLAENFIAFFNRDYRKVAELHVDSGWVPADTNVEDFEFAIRTVCEPIFEKPLAEISFGHVLLNLFNTARRFNMEVQPQLVLLQKTLLYVEGVGRQLYPQLDLWKTAKPFLENWIKDQIGIPAIVRALKEKAPYWAEKLPELPELFYDSLRQHKHLQHSVDRLTTDLRGERVRQHQSHYLFGVGATLLLSGTAVVLSRPEWDGLAAGLIAAGVVAWLVGWRKTS.

The Protein kinase domain maps to 123-501; it reads DFDIVPLASA…RVRQHQSHYL (379 aa). ATP-binding positions include 129–137 and Lys-152; that span reads LASASIAQV. Asp-287 serves as the catalytic Proton acceptor. A run of 2 helical transmembrane segments spans residues 498–518 and 521–541; these read SHYLFGVGATLLLSGTAVVLS and EWDGLAAGLIAAGVVAWLVGW.

This sequence belongs to the ABC1 family. UbiB subfamily.

It localises to the cell inner membrane. It functions in the pathway cofactor biosynthesis; ubiquinone biosynthesis [regulation]. Its function is as follows. Is probably a protein kinase regulator of UbiI activity which is involved in aerobic coenzyme Q (ubiquinone) biosynthesis. This chain is Probable protein kinase UbiB, found in Erwinia tasmaniensis (strain DSM 17950 / CFBP 7177 / CIP 109463 / NCPPB 4357 / Et1/99).